The following is a 313-amino-acid chain: Ribonuclease HIII (313 aa).

The 217-residue stretch at 94–310 folds into the RNase H type-2 domain; the sequence is MSVIGSDEVG…TQKAKRLVER (217 aa). A divalent metal cation-binding residues include Asp-100, Glu-101, and Asp-205.

Belongs to the RNase HII family. RnhC subfamily. Mn(2+) serves as cofactor. It depends on Mg(2+) as a cofactor.

It localises to the cytoplasm. The catalysed reaction is Endonucleolytic cleavage to 5'-phosphomonoester.. Endonuclease that specifically degrades the RNA of RNA-DNA hybrids. This chain is Ribonuclease HIII, found in Bacillus velezensis (strain DSM 23117 / BGSC 10A6 / LMG 26770 / FZB42) (Bacillus amyloliquefaciens subsp. plantarum).